Here is a 199-residue protein sequence, read N- to C-terminus: CASP-like protein 2B1 (199 aa).

Residues methionine 1–arginine 26 are Cytoplasmic-facing. The chain crosses the membrane as a helical span at residues leucine 27–isoleucine 47. The Extracellular segment spans residues alanine 48–lysine 69. A helical membrane pass occupies residues alanine 70–valine 90. The Cytoplasmic portion of the chain corresponds to arginine 91–proline 106. Residues leucine 107–alanine 127 form a helical membrane-spanning segment. Residues alanine 128–alanine 164 lie on the Extracellular side of the membrane. A helical transmembrane segment spans residues threonine 165–phenylalanine 185. Residues arginine 186 to tryptophan 199 are Cytoplasmic-facing.

Belongs to the Casparian strip membrane proteins (CASP) family. In terms of assembly, homodimer and heterodimers.

The protein localises to the cell membrane. This chain is CASP-like protein 2B1, found in Eutrema halophilum (Salt cress).